We begin with the raw amino-acid sequence, 529 residues long: Tyrosinase (529 aa).

Residues 1 to 18 (MLLAVLYCLLWSFQTSAG) form the signal peptide. The Lumenal, melanosome segment spans residues 19-476 (HFPRACVSSK…YLEQASRIWS (458 aa)). Asparagine 86, asparagine 111, and asparagine 161 each carry an N-linked (GlcNAc...) asparagine glycan. Residues histidine 180, histidine 202, and histidine 211 each coordinate Cu cation. Asparagine 230 carries an N-linked (GlcNAc...) asparagine glycan. Residues 287–313 (SLCNGTPEGPLQRNPGNHDKSRTPRLP) form a disordered region. Asparagine 337 carries N-linked (GlcNAc...) asparagine glycosylation. 2 residues coordinate Cu cation: histidine 363 and histidine 367. Asparagine 371 carries N-linked (GlcNAc...) asparagine glycosylation. Position 390 (histidine 390) interacts with Cu cation. Residues 477–497 (WLLGAAMVGAVLTALLAGLVS) traverse the membrane as a helical segment. Topologically, residues 498-529 (LLCRHKRKQLPEEKQPLLMEKEDYHSLYQSHL) are cytoplasmic.

The protein belongs to the tyrosinase family. As to quaternary structure, forms an OPN3-dependent complex with DCT in response to blue light in melanocytes. Requires Cu(2+) as cofactor. Glycosylated.

It localises to the melanosome membrane. Its subcellular location is the melanosome. The catalysed reaction is 2 L-dopa + O2 = 2 L-dopaquinone + 2 H2O. The enzyme catalyses L-tyrosine + O2 = L-dopaquinone + H2O. It carries out the reaction 2 5,6-dihydroxyindole-2-carboxylate + O2 = 2 indole-5,6-quinone-2-carboxylate + 2 H2O. Its function is as follows. This is a copper-containing oxidase that functions in the formation of pigments such as melanins and other polyphenolic compounds. Catalyzes the initial and rate limiting step in the cascade of reactions leading to melanin production from tyrosine. In addition to hydroxylating tyrosine to DOPA (3,4-dihydroxyphenylalanine), also catalyzes the oxidation of DOPA to DOPA-quinone, and possibly the oxidation of DHI (5,6-dihydroxyindole) to indole-5,6 quinone. The sequence is that of Tyrosinase (TYR) from Gorilla gorilla gorilla (Western lowland gorilla).